A 1380-amino-acid chain; its full sequence is DNA-directed RNA polymerase subunit beta (1380 aa).

The protein belongs to the RNA polymerase beta chain family. As to quaternary structure, the RNAP catalytic core consists of 2 alpha, 1 beta, 1 beta' and 1 omega subunit. When a sigma factor is associated with the core the holoenzyme is formed, which can initiate transcription.

It catalyses the reaction RNA(n) + a ribonucleoside 5'-triphosphate = RNA(n+1) + diphosphate. In terms of biological role, DNA-dependent RNA polymerase catalyzes the transcription of DNA into RNA using the four ribonucleoside triphosphates as substrates. This is DNA-directed RNA polymerase subunit beta from Ehrlichia ruminantium (strain Gardel).